The primary structure comprises 166 residues: Phospholipase A2 inhibitor A4/A5 (166 aa).

The N-terminal stretch at 1–19 is a signal peptide; that stretch reads MRLILLSGLLLLGTFLVNG. The region spanning 46-161 is the C-type lectin domain; it reads LFHAFLTVHK…CDDNLLVVCE (116 aa). 2 disulfide bridges follow: Cys-83/Cys-160 and Cys-138/Cys-152. Residue Asn-122 is glycosylated (N-linked (GlcNAc...) asparagine).

It belongs to the alpha-type phospholipase A2 inhibitor family. Homotrimer; non-covalently linked. As to expression, expressed by the liver.

It is found in the secreted. This phospholipase A2 inhibitor binds directly phospholipase A2 in the presence or absence of calcium. The protein is Phospholipase A2 inhibitor A4/A5 of Crotalus durissus terrificus (South American rattlesnake).